The following is a 581-amino-acid chain: Arginine--tRNA ligase (581 aa).

A 'HIGH' region motif is present at residues 126–136; that stretch reads PNLAKEMHVGH.

The protein belongs to the class-I aminoacyl-tRNA synthetase family. Monomer.

It is found in the cytoplasm. It carries out the reaction tRNA(Arg) + L-arginine + ATP = L-arginyl-tRNA(Arg) + AMP + diphosphate. This Shewanella baltica (strain OS223) protein is Arginine--tRNA ligase.